Consider the following 539-residue polypeptide: Acrosin-binding protein (539 aa).

Positions 1 to 25 are cleaved as a signal peptide; sequence MRQLAAGSLLSLLKVLLLPLAPAPA. The interval 26–106 is pro-ACR binding; that stretch reads QDANSASTPG…ASWFESFCQF (81 aa). Residues 26-269 constitute a propeptide, removed in active form; the sequence is QDANSASTPG…NPFSFTPRVR (244 aa). A disordered region spans residues 186 to 259; the sequence is LGGQEQGQEH…PKFQSEFVSS (74 aa). Residues 192-211 are compositionally biased toward basic and acidic residues; sequence GQEHKQEHKQEQGQEHKQDE. Over residues 212–238 the composition is skewed to acidic residues; the sequence is GQEQEEQEEEQEEEGKQEEGQGTEESL. A pro-ACR binding region spans residues 315-423; it reads LPHVDALLVL…TQIGTLKSGR (109 aa).

As to quaternary structure, binds specifically to the 55- and 53-kDa proacrosins and the 49-kDa acrosin intermediate, but is not capable of binding 43-kDa acrosin intermediate and 32-kDa mature acrosin. Post-translationally, the N-terminus is blocked. Synthesized as a 60-kDa precursor, the 35-kDa mature form is post-translationally produced by the removal of the N-terminal half of the precursor during sperm maturation in the testis and/or epididymis. In terms of processing, phosphorylated on Tyr residues in capacitated sperm. Specifically expressed in testis.

It localises to the secreted. The protein resides in the cytoplasmic vesicle. The protein localises to the secretory vesicle. Its subcellular location is the acrosome. Acrosomal protein that maintains proacrosin (pro-ACR) as an enzymatically inactive zymogen in the acrosome. Involved also in the acrosome formation. The sequence is that of Acrosin-binding protein from Sus scrofa (Pig).